We begin with the raw amino-acid sequence, 713 residues long: Calpain-1 catalytic subunit (713 aa).

The Calpain catalytic domain maps to 55 to 354; it reads LFQDEAFPPV…FTKLEICNLT (300 aa). Residues Gln-109 and Asp-114 each coordinate Ca(2+). Active-site residues include Cys-115, His-272, and Asn-296. Positions 318 and 323 each coordinate Ca(2+). Thr-354 is subject to Phosphothreonine. The interval 355–525 is domain III; the sequence is PDALKSRTLR…KKAGTQELDD (171 aa). A linker region spans residues 526–541; the sequence is QIQANLPDEKVLSEEE. EF-hand domains are found at residues 540–575, 584–617, 614–649, and 679–713; these read EEID…IISK, FSLE…NRIR, NRIR…AGFK, and VRLE…TMFA. The tract at residues 542-712 is domain IV; sequence IDDNFKTLFS…LFKWLQLTMF (171 aa). Asp-597, Asp-599, Asn-601, Lys-603, Glu-608, Asp-627, Asp-629, Ser-631, Ser-633, and Glu-638 together coordinate Ca(2+).

Belongs to the peptidase C2 family. Forms a heterodimer with a small (regulatory) subunit CAPNS1. Requires Ca(2+) as cofactor. In terms of processing, undergoes calcium-induced successive autoproteolytic cleavages that generate a membrane-bound 78 kDa active form and an intracellular 75 kDa active form. Calpastatin reduces with high efficiency the transition from 78 kDa to 75 kDa calpain forms.

The protein localises to the cytoplasm. It is found in the cell membrane. It catalyses the reaction Broad endopeptidase specificity.. With respect to regulation, activated by micromolar concentrations of calcium and inhibited by calpastatin. Its function is as follows. Calcium-regulated non-lysosomal thiol-protease which catalyzes limited proteolysis of substrates involved in cytoskeletal remodeling and signal transduction. Proteolytically cleaves CTBP1 at 'Asn-375', 'Gly-388' and 'His-410'. Cleaves and activates caspase-7 (CASP7). In Mus musculus (Mouse), this protein is Calpain-1 catalytic subunit.